The following is a 119-amino-acid chain: Large ribosomal subunit protein uL18 (119 aa).

The protein belongs to the universal ribosomal protein uL18 family. In terms of assembly, part of the 50S ribosomal subunit; part of the 5S rRNA/L5/L18/L25 subcomplex. Contacts the 5S and 23S rRNAs.

Its function is as follows. This is one of the proteins that bind and probably mediate the attachment of the 5S RNA into the large ribosomal subunit, where it forms part of the central protuberance. The sequence is that of Large ribosomal subunit protein uL18 from Clostridium beijerinckii (strain ATCC 51743 / NCIMB 8052) (Clostridium acetobutylicum).